Consider the following 258-residue polypeptide: Terpene cyclase macJ (258 aa).

Helical transmembrane passes span 29-49 (VPDG…ILMA), 58-78 (YAMP…YGFV), 83-103 (LLNQ…FYAI), 124-144 (IIVV…ATFI), 151-171 (VVFM…IAQL), 181-201 (SWGI…CFFW), and 220-240 (FLLL…VYVQ).

The protein belongs to the paxB family.

The protein resides in the membrane. Its pathway is secondary metabolite biosynthesis; terpenoid biosynthesis. In terms of biological role, terpene cyclase; part of the gene cluster that mediates the biosynthesis of macrophorins, isoprenoid epoxycyclohexenones containing cyclized drimane moieties. The first step of the pathway is the synthesis of 6-methylsalicylic acid (6-MSA) by the polyketide synthase macA. 6-MSA is then converted to m-cresol by the decarboxylase macB. The cytochrome P450 monooxygenase macC then catalyzes the oxidation of m-cresol to toluquinol. Epoxidation of toluquinol is then performed by the short chain dehydrogenase macD, with the help of macE, and a further prenylation by macG leads to 7-deacetoxyyanuthone A. The next step is the hydroxylation of C-22 of 7-deacetoxyyanuthone A by the cytochrome P450 monooxygenase macH to yield 22-deacetylyanuthone A. O-Mevalon transferase macI then attaches mevalon to the hydroxyl group of 22-deacetylyanuthone A to produce yanuthone E. The terpene cyclase macJ catalyzes the cyclization of 22-deacetylyanuthone A to macrophorin A. MacJ is also able to catalyze cyclization of yanuthone E and 7-deacetoxyyanuthone A to their corresponding macrophorins. The macJ products can be further modified by macH and macJ, as well as by the FAD-dependent monooxygenase macF, to produce additional macrophorins, including 4'-oxomacrophorin A, 4'-oxomacrophorin D and 4'-oxomacrophorin E. This chain is Terpene cyclase macJ, found in Penicillium terrestre.